A 293-amino-acid polypeptide reads, in one-letter code: MHWHLAITWTVIILTFSECYNQTCPCPCICVNSTTVSISTSETTSKNITPTTTTNSKKTTSSIATTTPSLVTTGKVVSTAASSTIISQTNRSHTSNAITTPKTRFEYNITGYVGQEVTLNFTGSWNYIQWFRYGSPGWLYSSEPICTVTSNYHHTFPRGALCFDCDMTKLLIYDLTLNDSGKYVVKRTRHDNQYEEACYSLTVIFANTTSIVTNRTCDRKRTENTDTTNHEIGKHIIETIKKANIPLGIHAVWAGIVVSVALIALYMGNRRRPRKPRYTRLPKYDPDESWTKT.

The N-terminal stretch at 1–19 (MHWHLAITWTVIILTFSEC) is a signal peptide. The chain crosses the membrane as a helical span at residues 245–265 (IPLGIHAVWAGIVVSVALIAL).

The protein localises to the virion membrane. In terms of biological role, may play a role in modifying tropism or in modulating cell signaling during virus entry. Since RL13 expression severely impairs HCMV replication in epithelial cell cultures, it may act as a regulator promoting persistence by suppressing the switch to fully lytic infection. This chain is Membrane protein RL13 (RL13), found in Human cytomegalovirus (strain Merlin) (HHV-5).